Consider the following 35-residue polypeptide: Mu-theraphotoxin-Hd1a (35 aa).

3 disulfides stabilise this stretch: C2–C17, C9–C24, and C16–C31.

It belongs to the neurotoxin 10 (Hwtx-1) family. 22 (Htx-4) subfamily. In terms of tissue distribution, expressed by the venom gland.

The protein localises to the secreted. Its function is as follows. Gating-modifier toxin that reversibly and voltage-independently inhibits human Nav1.1/SCN1A and Nav1.7/SCN9A (IC(50)=111 nM). It also shows moderate inhibition on Nav1.2/SCN2A (1 uM inhibits current by 55%), Nav1.6/SCN8A (31%), Nav1.3/SCN5A (27%) and Nav1.4/SCN4A (23%). This toxin inhibits Nav1.7/SCN9A by interacting with the S3b-S4 paddle motif in channel domain II. In Cyriopagopus doriae (Tarantula spider), this protein is Mu-theraphotoxin-Hd1a.